A 190-amino-acid chain; its full sequence is MVRVSTSEFRVGLRIEIDGQPYLILQNDFVKPGKGQAFNRIKVKNFLTGRVIERTFKSGESVETADVREQQMRFLYSDQEGATFMDDETFEQEMIFWDKIENIRQWLLEDTIYTLVLYNGNVIGVEPPIFMELTIAETAPGVRGDTASGRVLKPAVTNTGAKIMVPIFIEEGEVVKIDTRTGSYESRVSK.

Belongs to the elongation factor P family.

It is found in the cytoplasm. Its pathway is protein biosynthesis; polypeptide chain elongation. In terms of biological role, involved in peptide bond synthesis. Stimulates efficient translation and peptide-bond synthesis on native or reconstituted 70S ribosomes in vitro. Probably functions indirectly by altering the affinity of the ribosome for aminoacyl-tRNA, thus increasing their reactivity as acceptors for peptidyl transferase. The polypeptide is Elongation factor P 2 (efp2) (Chlamydia caviae (strain ATCC VR-813 / DSM 19441 / 03DC25 / GPIC) (Chlamydophila caviae)).